Here is a 238-residue protein sequence, read N- to C-terminus: Ribonuclease PH (238 aa).

Phosphate is bound by residues Arg86 and 124 to 126; that span reads GTR.

Belongs to the RNase PH family. In terms of assembly, homohexameric ring arranged as a trimer of dimers.

The catalysed reaction is tRNA(n+1) + phosphate = tRNA(n) + a ribonucleoside 5'-diphosphate. In terms of biological role, phosphorolytic 3'-5' exoribonuclease that plays an important role in tRNA 3'-end maturation. Removes nucleotide residues following the 3'-CCA terminus of tRNAs; can also add nucleotides to the ends of RNA molecules by using nucleoside diphosphates as substrates, but this may not be physiologically important. Probably plays a role in initiation of 16S rRNA degradation (leading to ribosome degradation) during starvation. This chain is Ribonuclease PH, found in Yersinia pseudotuberculosis serotype O:1b (strain IP 31758).